The sequence spans 183 residues: Ribose 1,5-bisphosphate phosphokinase PhnN (183 aa).

6–13 (GPSGAGKD) provides a ligand contact to ATP.

The protein belongs to the ribose 1,5-bisphosphokinase family.

The enzyme catalyses alpha-D-ribose 1,5-bisphosphate + ATP = 5-phospho-alpha-D-ribose 1-diphosphate + ADP. It participates in metabolic intermediate biosynthesis; 5-phospho-alpha-D-ribose 1-diphosphate biosynthesis; 5-phospho-alpha-D-ribose 1-diphosphate from D-ribose 5-phosphate (route II): step 3/3. Catalyzes the phosphorylation of ribose 1,5-bisphosphate to 5-phospho-D-ribosyl alpha-1-diphosphate (PRPP). This chain is Ribose 1,5-bisphosphate phosphokinase PhnN, found in Agrobacterium fabrum (strain C58 / ATCC 33970) (Agrobacterium tumefaciens (strain C58)).